Consider the following 168-residue polypeptide: Transcriptional repressor NrdR (168 aa).

The segment at 3-34 is a zinc-finger region; it reads CPYCGFAQDRVVDSRESKEADSIRRRRECERC. The ATP-cone domain maps to 49–139; it reads YMVVKKDGRR…VYRDFKDVNE (91 aa).

The protein belongs to the NrdR family. Requires Zn(2+) as cofactor.

In terms of biological role, negatively regulates transcription of bacterial ribonucleotide reductase nrd genes and operons by binding to NrdR-boxes. In Acidobacterium capsulatum (strain ATCC 51196 / DSM 11244 / BCRC 80197 / JCM 7670 / NBRC 15755 / NCIMB 13165 / 161), this protein is Transcriptional repressor NrdR.